The primary structure comprises 316 residues: MKPYYWESQHGNFGDDLNLWLWDFLLPGFREVYPETLLVGVGTVLNRALLPKATHKLVIGSGFGYGTLPDMSDPKEWDIRSVRGPLTAAKVGVAPELGIIDPAVMVADLPEFQGLRKIYKRSFVPHWESAIAGLWPAICDAVGLNYIDPRGEAKDVIRKIGQSELIVAESMHGAILADAFRVPWTAVSTSHSINSFKWNDWAQTLGVTYRPRRVPVSTRAEAMIKGARFWGMDFQAKEPQPEDPNRRQIDGDLAVAEREPRQTSLRAAAKRALAAPATLALWQASRAAPQLSKDSALAERKERFRTVLDGIRRDYF.

Its pathway is glycan metabolism; exopolysaccharide biosynthesis. In Rhizobium meliloti (strain 1021) (Ensifer meliloti), this protein is Succinoglycan biosynthesis protein ExoV (exoV).